Reading from the N-terminus, the 93-residue chain is Cobalt transport protein CbiN (93 aa).

A run of 2 helical transmembrane segments spans residues 5–25 (LMLL…NHGG) and 63–83 (LLFT…LGYC).

The protein belongs to the CbiN family. In terms of assembly, forms an energy-coupling factor (ECF) transporter complex composed of an ATP-binding protein (A component, CbiO), a transmembrane protein (T component, CbiQ) and 2 possible substrate-capture proteins (S components, CbiM and CbiN) of unknown stoichimetry.

The protein resides in the cell inner membrane. It participates in cofactor biosynthesis; adenosylcobalamin biosynthesis. Its function is as follows. Part of the energy-coupling factor (ECF) transporter complex CbiMNOQ involved in cobalt import. This is Cobalt transport protein CbiN from Salmonella agona (strain SL483).